The following is a 691-amino-acid chain: Elongation factor G (691 aa).

The tr-type G domain maps to 8-283; it reads DMQRNIGIMA…AVVDFLPSPV (276 aa). Residues 17 to 24, 81 to 85, and 135 to 138 contribute to the GTP site; these read AHIDAGKT, DTPGH, and NKMD.

The protein belongs to the TRAFAC class translation factor GTPase superfamily. Classic translation factor GTPase family. EF-G/EF-2 subfamily.

It localises to the cytoplasm. In terms of biological role, catalyzes the GTP-dependent ribosomal translocation step during translation elongation. During this step, the ribosome changes from the pre-translocational (PRE) to the post-translocational (POST) state as the newly formed A-site-bound peptidyl-tRNA and P-site-bound deacylated tRNA move to the P and E sites, respectively. Catalyzes the coordinated movement of the two tRNA molecules, the mRNA and conformational changes in the ribosome. This is Elongation factor G from Nitratidesulfovibrio vulgaris (strain ATCC 29579 / DSM 644 / CCUG 34227 / NCIMB 8303 / VKM B-1760 / Hildenborough) (Desulfovibrio vulgaris).